A 417-amino-acid chain; its full sequence is NADH-quinone oxidoreductase subunit D (417 aa).

Belongs to the complex I 49 kDa subunit family. As to quaternary structure, NDH-1 is composed of 14 different subunits. Subunits NuoB, C, D, E, F, and G constitute the peripheral sector of the complex.

Its subcellular location is the cell inner membrane. The catalysed reaction is a quinone + NADH + 5 H(+)(in) = a quinol + NAD(+) + 4 H(+)(out). In terms of biological role, NDH-1 shuttles electrons from NADH, via FMN and iron-sulfur (Fe-S) centers, to quinones in the respiratory chain. The immediate electron acceptor for the enzyme in this species is believed to be ubiquinone. Couples the redox reaction to proton translocation (for every two electrons transferred, four hydrogen ions are translocated across the cytoplasmic membrane), and thus conserves the redox energy in a proton gradient. This is NADH-quinone oxidoreductase subunit D from Nitrosomonas europaea (strain ATCC 19718 / CIP 103999 / KCTC 2705 / NBRC 14298).